The chain runs to 430 residues: MTEPDTERKGSSRRGFLAGLGAAALTGAGIGMAAGEVLRPLLPDSDPAASPEAEQRLRMAAQRADATAAPQPGISGPAPAFVHVIALDLAEEARKNPDTARDSAAAALRSWTELAARLHEESPHDIAEGAASAGLLPASLMVTVGIGGSLLSAIDAEDRRPDALADLPEFSTDDLHPRWCGGDFMLQVGAEDPMVLTAAVEELVAAAADATAVRWSLRGFRRTAAAARDPDATPRNLMGQIDGTANPAQDHPLFDRTITARPADNPAHAWMDGGSYLVVRRIRMLLTEWRKLDVAARERVIGRRLDTGAPLGSRNETDPVVLSARDEEGEPLIPENAHVRLASPENNLGARMFRRGYSYDQGWRDDGVRDAGLLFMAWQGDPATGFIPVQRSLADQGDALNRYIRHEGSALFAVPAAREGRYLGQDLIEG.

The segment at residues 1-39 (MTEPDTERKGSSRRGFLAGLGAAALTGAGIGMAAGEVLR) is a signal peptide (tat-type signal). A disordered region spans residues 42–75 (LPDSDPAASPEAEQRLRMAAQRADATAAPQPGIS). The span at 60-69 (AAQRADATAA) shows a compositional bias: low complexity. The active-site Proton acceptor is Asp242. Residue His338 coordinates heme.

It belongs to the DyP-type peroxidase family. Monomer. Heme b serves as cofactor. Post-translationally, exported by the Tat system. The position of the signal peptide cleavage has not been experimentally proven.

It localises to the secreted. The enzyme catalyses Reactive Blue 5 + 2 H2O2 = 2,2'-disulfonyl azobenzene + 3-[(4-amino-6-chloro-1,3,5-triazin-2-yl)amino]benzenesulfonate + phthalate + 2 H2O + 2 H(+). Functionally, peroxidase that is able to convert a large number of compounds, but its physiological substrate is not known. Shows high reactivity towards anthraquinone dyes (e.g. Reactive Blue 19) and a modest activity towards standard peroxidase substrates (such as guaiacol and 2,6-dimethoxyphenol) and azo dyes (e.g. Reactive Blue 5). Is also able to oxidize aromatic sulfides enantioselectively, resulting in the corresponding (R)-sulfoxides, but with a poor efficiency. Does not display catalase activity. In Thermobifida fusca (strain YX), this protein is Dye-decolorizing peroxidase Tfu_3078.